We begin with the raw amino-acid sequence, 247 residues long: UDP-N-acetyl-D-mannosaminuronic acid transferase (247 aa).

Belongs to the glycosyltransferase 26 family.

The enzyme catalyses UDP-N-acetyl-alpha-D-mannosaminouronate + N-acetyl-alpha-D-glucosaminyl-di-trans,octa-cis-undecaprenyl diphosphate = beta-D-ManNAcA-(1-&gt;4)-alpha-D-GlcNAc-di-trans,octa-cis-undecaprenyl diphosphate + UDP + H(+). Its pathway is bacterial outer membrane biogenesis; enterobacterial common antigen biosynthesis. In terms of biological role, catalyzes the synthesis of Und-PP-GlcNAc-ManNAcA (Lipid II), the second lipid-linked intermediate involved in enterobacterial common antigen (ECA) synthesis. In Enterobacter sp. (strain 638), this protein is UDP-N-acetyl-D-mannosaminuronic acid transferase.